Here is a 177-residue protein sequence, read N- to C-terminus: Zinc metalloproteinase-disintegrin-like scutiarin (177 aa).

Residues 1 to 63 (NPCCDAATCK…ECPADVFHKN (63 aa)) form the Disintegrin domain. 10 cysteine pairs are disulfide-bonded: cysteine 3-cysteine 26, cysteine 17-cysteine 23, cysteine 22-cysteine 48, cysteine 35-cysteine 55, cysteine 42-cysteine 74, cysteine 67-cysteine 79, cysteine 86-cysteine 136, cysteine 101-cysteine 147, cysteine 114-cysteine 124, and cysteine 131-cysteine 173. Positions 41-43 (ECD) match the D/ECD-tripeptide motif. Ca(2+) is bound by residues aspartate 43, proline 44, glutamate 46, aspartate 58, and valine 59.

The protein belongs to the venom metalloproteinase (M12B) family. P-III subfamily. P-IIIa sub-subfamily. Monomer. The cofactor is Zn(2+). Post-translationally, glycosylated. In terms of tissue distribution, expressed by the venom gland.

It is found in the secreted. Functionally, snake venom metalloproteinase that impairs hemostasis in the envenomed animal. This chain is Zinc metalloproteinase-disintegrin-like scutiarin, found in Crotalus scutulatus scutulatus (Mojave rattlesnake).